Here is a 180-residue protein sequence, read N- to C-terminus: MTLKELVVGFGTQIRSICMVGSNAFKKRETRMYPEEPVNPPPRYRGRIVLTRDPDGEERCVACNLCAVACPVGCISLQKAETKDGRWYPEFFRVNFSRCIFCGFCEEACPTTAIQLTPDFEMGEYKRQDLVYEKEDLLISGPGKYPEYNFYRMAGMAIDGKDKGEAENEAKPIDVKGLLP.

4Fe-4S ferredoxin-type domains lie at 50–80 (LTRD…LQKA) and 90–119 (EFFR…LTPD). [4Fe-4S] cluster is bound by residues C60, C63, C66, C70, C99, C102, C105, and C109.

Belongs to the complex I 23 kDa subunit family. As to quaternary structure, NDH-1 is composed of 13 different subunits. Subunits NuoA, H, J, K, L, M, N constitute the membrane sector of the complex. The cofactor is [4Fe-4S] cluster.

It localises to the cell inner membrane. It carries out the reaction a quinone + NADH + 5 H(+)(in) = a quinol + NAD(+) + 4 H(+)(out). Its function is as follows. NDH-1 shuttles electrons from NADH, via FMN and iron-sulfur (Fe-S) centers, to quinones in the respiratory chain. The immediate electron acceptor for the enzyme in this species is believed to be ubiquinone. Couples the redox reaction to proton translocation (for every two electrons transferred, four hydrogen ions are translocated across the cytoplasmic membrane), and thus conserves the redox energy in a proton gradient. This Pectobacterium atrosepticum (strain SCRI 1043 / ATCC BAA-672) (Erwinia carotovora subsp. atroseptica) protein is NADH-quinone oxidoreductase subunit I.